The chain runs to 393 residues: Protein TsgA (393 aa).

12 helical membrane-spanning segments follow: residues 11 to 31 (WISF…GMVM), 51 to 71 (FLNA…EIIP), 78 to 98 (FGFI…SLAL), 101 to 121 (AAMF…TFLI), 134 to 154 (LLFT…VAAF), 162 to 182 (WYWV…LTFG), 206 to 226 (IGVL…LGFI), 245 to 265 (ALVS…SFIL), 273 to 293 (ILTV…TGTQ), 298 to 318 (WFIL…ITLG), 332 to 352 (FILT…GPIV), and 361 to 381 (LLTA…LGFV).

Belongs to the major facilitator superfamily. TsgA family.

It is found in the cell inner membrane. This is Protein TsgA from Salmonella schwarzengrund (strain CVM19633).